The sequence spans 131 residues: Transcription antitermination protein NusB (131 aa).

It belongs to the NusB family.

Functionally, involved in transcription antitermination. Required for transcription of ribosomal RNA (rRNA) genes. Binds specifically to the boxA antiterminator sequence of the ribosomal RNA (rrn) operons. This is Transcription antitermination protein NusB from Campylobacter hominis (strain ATCC BAA-381 / DSM 21671 / CCUG 45161 / LMG 19568 / NCTC 13146 / CH001A).